The primary structure comprises 286 residues: tRNA (guanine-N(7)-)-methyltransferase (286 aa).

Residues 1-21 (MTNPESTAIDPVAAMGTDHTE) are disordered. S-adenosyl-L-methionine-binding residues include glutamate 91, glutamate 116, asparagine 143, and aspartate 165. Residue aspartate 165 is part of the active site. Substrate contacts are provided by residues lysine 169, aspartate 201, and 262–265 (TNFE).

This sequence belongs to the class I-like SAM-binding methyltransferase superfamily. TrmB family.

The enzyme catalyses guanosine(46) in tRNA + S-adenosyl-L-methionine = N(7)-methylguanosine(46) in tRNA + S-adenosyl-L-homocysteine. Its pathway is tRNA modification; N(7)-methylguanine-tRNA biosynthesis. Functionally, catalyzes the formation of N(7)-methylguanine at position 46 (m7G46) in tRNA. In Bifidobacterium longum (strain NCC 2705), this protein is tRNA (guanine-N(7)-)-methyltransferase.